Here is a 524-residue protein sequence, read N- to C-terminus: NAD(P)H-quinone oxidoreductase chain 4, chloroplastic (524 aa).

14 helical membrane-spanning segments follow: residues 4–24, 31–51, 87–107, 113–133, 134–154, 167–187, 211–231, 242–262, 275–295, 308–328, 330–350, 386–406, 417–437, and 465–485; these read YPWLTIITLFPISAGLLIPLI, LIRWYALGICLIDFLLMTYVF, IALVLLTGFITTLATLAAWPV, LFYFLMLAMYSGQLGLFLAQD, LLLFFFMWELELIPVYLLLSM, FILYTAGGSIFLLAAILTISL, ILVYLGFLIAYAVKLPVFPFH, HYSTCMLLAGILLKMGGYGFI, IFAPWLVALGAGQIVYAALVS, SSVSHMGFVLIGAGSFSDLGL, GAILQMISHGLIGAGLFFLAG, LALPGMSGFVAELMIFLGIVA, IITCVEGIGIILTPIYLLSMV, and VFIILSLLVPMLGIGFYPDLT.

This sequence belongs to the complex I subunit 4 family.

The protein resides in the plastid. It is found in the chloroplast thylakoid membrane. It catalyses the reaction a plastoquinone + NADH + (n+1) H(+)(in) = a plastoquinol + NAD(+) + n H(+)(out). It carries out the reaction a plastoquinone + NADPH + (n+1) H(+)(in) = a plastoquinol + NADP(+) + n H(+)(out). The polypeptide is NAD(P)H-quinone oxidoreductase chain 4, chloroplastic (Staurastrum punctulatum (Green alga)).